A 318-amino-acid chain; its full sequence is Polyprenal reductase (318 aa).

Residues 1-19 (MAPWAAAQLWALNPLRALW) lie on the Cytoplasmic side of the membrane. The chain crosses the membrane as a helical span at residues 20–40 (LTLAAAFLLTLLLQLVPPGLL). The Lumenal segment spans residues 41–80 (PGCALFQDLIRYGKTKREGQSRPAVCRVFDVPKRYFSHFY). The helical transmembrane segment at 81-101 (IISALWNGFLLWHLTQSVFLG) threads the bilayer. Over 102-119 (VPFPNWLHGLLRILGASQ) the chain is Cytoplasmic. A helical transmembrane segment spans residues 120–140 (FQGGELALSAFLVLVFLWLHS). Residues 141 to 156 (LRRLFECFYVSVFSNT) are Lumenal-facing. Residues 157–177 (VIHIVQYCFGLVYYVLTGLTV) traverse the membrane as a helical segment. At 178-194 (LSQVPMDGRNAYVIGKN) the chain is on the cytoplasmic side. Residues 195 to 215 (LLMQARWFHILGMLMFIWSSV) traverse the membrane as a helical segment. The Lumenal portion of the chain corresponds to 216 to 265 (HQYKCHVILGNLRKNKAGVVIHCNHRIPFGDWFEYVSSPNYLAELMIYIS). A helical membrane pass occupies residues 266 to 286 (MAVTFGFHNLTWWLVVTYVFF). At 287–318 (SQALSAFLSHKFYKSKFVSYPKHRKAFLPFLF) the chain is on the cytoplasmic side.

The protein belongs to the steroid 5-alpha reductase family. Polyprenal reductase subfamily.

The protein localises to the endoplasmic reticulum membrane. The catalysed reaction is a di-trans,poly-cis-dolichal + NADP(+) = a di-trans,poly-cis-polyprenal + NADPH + H(+). It carries out the reaction a 3-oxo-5alpha-steroid + NADP(+) = a 3-oxo-Delta(4)-steroid + NADPH + H(+). The enzyme catalyses androst-4-ene-3,17-dione + NADPH + H(+) = 5alpha-androstan-3,17-dione + NADP(+). It catalyses the reaction 17beta-hydroxy-5alpha-androstan-3-one + NADP(+) = testosterone + NADPH + H(+). It participates in protein modification; protein glycosylation. Its function is as follows. Plays a key role in early steps of protein N-linked glycosylation by being involved in the conversion of polyprenol into dolichol. Acts as a polyprenal reductase that mediates the reduction of polyprenal into dolichal in a NADP-dependent mechanism. Dolichols are required for the synthesis of dolichol-linked monosaccharides and the oligosaccharide precursor used for N-glycosylation. Also able to convert testosterone (T) into 5-alpha-dihydrotestosterone (DHT). The sequence is that of Polyprenal reductase (SRD5A3) from Ailuropoda melanoleuca (Giant panda).